Here is a 203-residue protein sequence, read N- to C-terminus: V-type ATP synthase subunit D (203 aa).

It belongs to the V-ATPase D subunit family.

Its function is as follows. Produces ATP from ADP in the presence of a proton gradient across the membrane. In Chlamydia muridarum (strain MoPn / Nigg), this protein is V-type ATP synthase subunit D (atpD).